Reading from the N-terminus, the 380-residue chain is Cytochrome b (380 aa).

4 consecutive transmembrane segments (helical) span residues 34 to 54 (FGSL…LLAM), 78 to 99 (WLIR…YLHI), 114 to 134 (WNTG…GYVL), and 179 to 199 (FFAL…IHLT). Heme b-binding residues include histidine 84 and histidine 98. Histidine 183 and histidine 197 together coordinate heme b. Residue histidine 202 coordinates a ubiquinone. 4 helical membrane-spanning segments follow: residues 227-247 (LKDI…ALFS), 289-309 (LGGV…PFLH), 321-341 (LSQL…WVGS), and 348-368 (FIII…ILFP).

The protein belongs to the cytochrome b family. The cytochrome bc1 complex contains 11 subunits: 3 respiratory subunits (MT-CYB, CYC1 and UQCRFS1), 2 core proteins (UQCRC1 and UQCRC2) and 6 low-molecular weight proteins (UQCRH/QCR6, UQCRB/QCR7, UQCRQ/QCR8, UQCR10/QCR9, UQCR11/QCR10 and a cleavage product of UQCRFS1). This cytochrome bc1 complex then forms a dimer. Heme b serves as cofactor.

The protein resides in the mitochondrion inner membrane. In terms of biological role, component of the ubiquinol-cytochrome c reductase complex (complex III or cytochrome b-c1 complex) that is part of the mitochondrial respiratory chain. The b-c1 complex mediates electron transfer from ubiquinol to cytochrome c. Contributes to the generation of a proton gradient across the mitochondrial membrane that is then used for ATP synthesis. This Calonectris leucomelas (Streaked shearwater) protein is Cytochrome b (MT-CYB).